The sequence spans 256 residues: uncharacterized protein (256 aa).

The signal sequence occupies residues 1 to 22 (MGYLKRIGMCISLLIVIIFVTS). A lipid anchor (N-palmitoyl cysteine) is attached at Cys-23. A lipid anchor (S-diacylglycerol cysteine) is attached at Cys-23.

It belongs to the staphylococcal tandem lipoprotein family.

It is found in the cell membrane. This is an uncharacterized protein from Staphylococcus aureus (strain MSSA476).